Reading from the N-terminus, the 1406-residue chain is MASCASIDIEDATQHLRDILKLDRPAGGSNAESQRPSSAYNGDLNGLLVPDPLSSGDGNSTNKPGIRTMPPINLQEKQVICLSGDDSSTCIGILAKEVEIVASSDSSISSKARGSNKVKIQPVAKYDWEQKYYYGNLIAVSNSFLAYAIRAANNGSAMVRVISVSTSERTLLKGFTGSVADLAFAHLNSPQLACLDEAGNLFVWRLALVKGKIQEEILVHIRQPEGTALNHFRRIIWCPFIPEESEDCCEESSPTVALLHEDRAEVWDLDMLRSSHNTWPVDVSQIKQGFIVVKGHSTCLSEGALSPDGTVLATASHDGFVKFWQIYIEGQDEPRCLHEWKPHDGRPLSCLLFCDNHKKQDPEVPFWRFLITGADQNRELKMWCTVSWTCLQTIRFSPDIFSSVSVPPSLKVCLDLSAEYLILSDVQRKVLYVMELLQNQDEGRACFSSISEFLLTHPVLSFGIQVVSRCRLRHTEVLPAEEENDSLGTESSHGAGALESAAGVLIKLFCVHTKALQDVQIRFQPQLNPDVVAPLSTHTAHEDFTFGESRPELGSEGLASAAHGSQPDLRRIVELPAPADFLSLSSETKPELMTPDAFMTPTASLQQISASPSSSSSSSSSSSSSSSSSSSSLTAVSAVSSSSAMDPSLPRPPEELTLSPKLQLDGSLTLNSSSSSLQASPRSLLPGLLPGPADKLISKGPGQVSTAASALSLDLQEVEPLGLPQASPSRTRSPDVISSASTALSQDIPEIASEALSRGFGSSVPEGLIEPNSMASAASALHLLSPRPRQGPELGSQLGLDGGPGDGDRHSTPSLLEAALTQEVATPDSQVWPTAPDITRETCSTLTESPRNGLQEKHKSLAFHRPPYHLLQQRDSQDTSAEQSDHDDEVASLASASGGFGSKIPTPRLPSKDWKTKGSPRTSPKLKRKSKKDDGDSAVGSRLTEHQVAEPPEDWPALIWQQQRELAELWHNQEELLQRLCAQLEGLQSTVTDHVERALETRHEQEQRRLERALAEGQQRGGQLQEQLTQQLSQALSSAVAGRLERSVRDEIKKTVPPCVSRSLEPVAGQLSNSVATKLTAVEGSMKENISKLLKSKNLTDAIARAAADTLQGPMQAAYREAFQSVVLPAFEKSCQAMFQQINDSFRLGTQEYLQQLESHMKSRKAREQEAREPVLAQLRGLVSTLQSATEQMAATVSSSVRAEVQHQLHVAVGSLQESILAQVQRIVKGEVSVALKEQQATVTSSIMQAMRSAAGTPVPSAHLDCQAQQAHILQLLQQGHLNQAFQQALTAADLNLVLYVCETVDPAQVFGQPPCPLSQPVLLSLIQQLASDLGTRSDLKLSYLEEAVMHLDHSDPITRDHMGSVMAQVRQKLFQFLQADPHNSLSKAARRLSLMLHGLVTPSLP.

Position 2 is an N-acetylalanine (Ala-2). Phosphoserine is present on residues Ser-3 and Ser-6. An N6-acetyllysine modification is found at Lys-125. 4 WD repeats span residues 174-214, 230-277, 295-334, and 342-393; these read GFTG…GKIQ, NHFR…SSHN, GHSTCLSEGALSPDGTVLATASHDGFVKFWQIYIEGQDEP, and PHDG…CLQT. Ser-560, Ser-565, Ser-583, and Ser-585 each carry phosphoserine. Disordered regions lie at residues 604–631 and 667–686; these read SLQQISASPSSSSSSSSSSSSSSSSSSS and SLTLNSSSSSLQASPRSLLP. A compositionally biased stretch (low complexity) spans 609-631; the sequence is SASPSSSSSSSSSSSSSSSSSSS. Residues Ser-680, Ser-712, Ser-727, and Ser-729 each carry the phosphoserine modification. The interval 719–744 is disordered; the sequence is EPLGLPQASPSRTRSPDVISSASTAL. Over residues 726 to 744 the composition is skewed to polar residues; sequence ASPSRTRSPDVISSASTAL. Thr-731 carries the phosphothreonine modification. Residues Ser-733 and Ser-745 each carry the phosphoserine modification. Disordered regions lie at residues 782–855 and 873–951; these read HLLS…NGLQ and QRDS…VAEP. Composition is skewed to polar residues over residues 823–832 and 841–852; these read EVATPDSQVW and ETCSTLTESPRN. Thr-826 bears the Phosphothreonine mark. 2 positions are modified to phosphoserine: Ser-849 and Ser-876. The residue at position 879 (Thr-879) is a Phosphothreonine. Ser-880, Ser-884, Ser-892, Ser-895, and Ser-897 each carry phosphoserine. The residue at position 906 (Thr-906) is a Phosphothreonine. The stretch at 971-1030 forms a coiled coil; the sequence is HNQEELLQRLCAQLEGLQSTVTDHVERALETRHEQEQRRLERALAEGQQRGGQLQEQLTQ. Residue Ser-1385 is modified to Phosphoserine.

Belongs to the WD repeat EDC4 family. In terms of assembly, part of a decapping complex consisting of DCP1A, DCP2, EDC3, EDC4 and probably DDX6. Part of a complex consisting of DCP1A, EDC3, EDC4 and DDX6. Part of a complex consisting of DCP1B, EDC3, EDC4 and DDX6. Interacts with DCP2. Interacts with RC3H1. Interacts with NBDY. Interacts with Tex19.1 and, probably, Tex19.2. Interacts with LSM14A. Interacts with DDX6.

It localises to the cytoplasm. It is found in the P-body. The protein resides in the nucleus. Its function is as follows. In the process of mRNA degradation, seems to play a role in mRNA decapping. Component of a complex containing DCP2 and DCP1A which functions in decapping of ARE-containing mRNAs. Promotes complex formation between DCP1A and DCP2. Enhances the catalytic activity of DCP2 (in vitro). This chain is Enhancer of mRNA-decapping protein 4, found in Mus musculus (Mouse).